The sequence spans 330 residues: Polyprenal reductase (330 aa).

Topologically, residues 1–16 (MAGWAGAELSVLNPLR) are cytoplasmic. A helical transmembrane segment spans residues 17-37 (ALWLLLAAAFLLALLLQLAPA). Residues 38–89 (RLLPSCALFQDLIRYGKTKQSGSRRPAVCRAFDVPKRYFSHFYVVSVLWNGS) are Lumenal-facing. A helical transmembrane segment spans residues 90 to 110 (LLWFLSQSLFLGAPFPSWLWA). The Cytoplasmic segment spans residues 111–136 (LLRTLGVTQFQALGMESKASRIQGKK). A helical transmembrane segment spans residues 137–157 (LALSTFLVLVFLWVHSLRRLF). Residues 158–169 (ECFYVSVFSNTA) lie on the Lumenal side of the membrane. The helical transmembrane segment at 170-190 (IHVVQYCFGLVYYVLVGLTVL) threads the bilayer. The Cytoplasmic segment spans residues 191-206 (SQVPMNDKNVYALGKN). The helical transmembrane segment at 207–227 (LLLQARWFHILGMMMFFWSSA) threads the bilayer. Topologically, residues 228 to 277 (HQYKCHVILSNLRRNKKGVVIHCQHRIPFGDWFEYVSSANYLAELMIYIS) are lumenal. A helical membrane pass occupies residues 278–298 (MAVTFGLHNVTWWLVVTYVFF). Residues 299 to 330 (SQALSAFFNHRFYKSTFVSYPKHRKAFLPFLF) lie on the Cytoplasmic side of the membrane.

This sequence belongs to the steroid 5-alpha reductase family. Polyprenal reductase subfamily. Expressed in the 2 tissues tested i.e. testis and liver.

The protein resides in the endoplasmic reticulum membrane. It catalyses the reaction a di-trans,poly-cis-dolichal + NADP(+) = a di-trans,poly-cis-polyprenal + NADPH + H(+). It carries out the reaction a 3-oxo-5alpha-steroid + NADP(+) = a 3-oxo-Delta(4)-steroid + NADPH + H(+). The catalysed reaction is androst-4-ene-3,17-dione + NADPH + H(+) = 5alpha-androstan-3,17-dione + NADP(+). The enzyme catalyses 17beta-hydroxy-5alpha-androstan-3-one + NADP(+) = testosterone + NADPH + H(+). It participates in protein modification; protein glycosylation. In terms of biological role, plays a key role in early steps of protein N-linked glycosylation by being involved in the conversion of polyprenol into dolichol. Acts as a polyprenal reductase that mediates the reduction of polyprenal into dolichal in a NADP-dependent mechanism. Dolichols are required for the synthesis of dolichol-linked monosaccharides and the oligosaccharide precursor used for N-glycosylation. Also able to convert testosterone (T) into 5-alpha-dihydrotestosterone (DHT). The chain is Polyprenal reductase from Rattus norvegicus (Rat).